The primary structure comprises 477 residues: MSSFETTIGLEVHVELKTKSKAFSLSPVNFGDPANENTNVIDWGYPGVLPSANKGALESGMMAALALNAQITRDVHWDRKNYFYPDNPKSYQVTQQQTPIGHDGYVEIKKEDGTSKRIGIKELHVEEDAGKNSHSGKGYSLVDLNRQGTPLVEIVSQPNISSPDEAYLYLEKLRQLIQFTGISDVKMQEGSMRVDINISVRPIGAEKYGTKVEIKNVNSFQYAKNALAYEEQRQRDELMAGHIIGQETRRFDEPTKSTILMRVKEGADDYRYFPEPDLPVIHVSDEWIKAVKSSLPETADDRIARYINKFALSKKEAAVLTQTLEMANFYDQVVDDGADPKRTANYLIGDVNAYLNETQLDLQDTKLTPGHLSGMIKLIDNGTISTKQAKKVFTAITDGEEPKAYVEKNGLVQLSDPNKLTPIINQILDDNQQSIDDFKGGKDRTIGYLTGQVMKKTHGNANPKIVHEILLAELKKR.

This sequence belongs to the GatB/GatE family. GatB subfamily. Heterotrimer of A, B and C subunits.

It carries out the reaction L-glutamyl-tRNA(Gln) + L-glutamine + ATP + H2O = L-glutaminyl-tRNA(Gln) + L-glutamate + ADP + phosphate + H(+). The catalysed reaction is L-aspartyl-tRNA(Asn) + L-glutamine + ATP + H2O = L-asparaginyl-tRNA(Asn) + L-glutamate + ADP + phosphate + 2 H(+). In terms of biological role, allows the formation of correctly charged Asn-tRNA(Asn) or Gln-tRNA(Gln) through the transamidation of misacylated Asp-tRNA(Asn) or Glu-tRNA(Gln) in organisms which lack either or both of asparaginyl-tRNA or glutaminyl-tRNA synthetases. The reaction takes place in the presence of glutamine and ATP through an activated phospho-Asp-tRNA(Asn) or phospho-Glu-tRNA(Gln). The chain is Aspartyl/glutamyl-tRNA(Asn/Gln) amidotransferase subunit B from Oenococcus oeni (strain ATCC BAA-331 / PSU-1).